A 268-amino-acid polypeptide reads, in one-letter code: GTP cyclohydrolase FolE2 (268 aa).

This sequence belongs to the GTP cyclohydrolase IV family.

The enzyme catalyses GTP + H2O = 7,8-dihydroneopterin 3'-triphosphate + formate + H(+). It participates in cofactor biosynthesis; 7,8-dihydroneopterin triphosphate biosynthesis; 7,8-dihydroneopterin triphosphate from GTP: step 1/1. Functionally, converts GTP to 7,8-dihydroneopterin triphosphate. The polypeptide is GTP cyclohydrolase FolE2 (Ralstonia nicotianae (strain ATCC BAA-1114 / GMI1000) (Ralstonia solanacearum)).